The primary structure comprises 269 residues: Tryptophan synthase alpha chain (269 aa).

Active-site proton acceptor residues include Glu-49 and Asp-60.

The protein belongs to the TrpA family. In terms of assembly, tetramer of two alpha and two beta chains.

It catalyses the reaction (1S,2R)-1-C-(indol-3-yl)glycerol 3-phosphate + L-serine = D-glyceraldehyde 3-phosphate + L-tryptophan + H2O. It participates in amino-acid biosynthesis; L-tryptophan biosynthesis; L-tryptophan from chorismate: step 5/5. Its function is as follows. The alpha subunit is responsible for the aldol cleavage of indoleglycerol phosphate to indole and glyceraldehyde 3-phosphate. The sequence is that of Tryptophan synthase alpha chain from Pseudomonas putida (strain W619).